Reading from the N-terminus, the 602-residue chain is Glutamyl-tRNA(Gln) amidotransferase subunit B, mitochondrial (602 aa).

Residues 1–56 (MFRSCLRHCRRATVRSRTCPRCSHHEIPQLQVVQRQISLSSSFPHIRRLQTSSTDT) constitute a mitochondrion transit peptide.

It belongs to the GatB/GatE family. GatB subfamily. As to quaternary structure, subunit of the heterotrimeric GatCAB amidotransferase (AdT) complex, composed of A, B and C subunits.

The protein resides in the mitochondrion. It carries out the reaction L-glutamyl-tRNA(Gln) + L-glutamine + ATP + H2O = L-glutaminyl-tRNA(Gln) + L-glutamate + ADP + phosphate + H(+). In terms of biological role, allows the formation of correctly charged Gln-tRNA(Gln) through the transamidation of misacylated Glu-tRNA(Gln) in the mitochondria. The reaction takes place in the presence of glutamine and ATP through an activated gamma-phospho-Glu-tRNA(Gln). The sequence is that of Glutamyl-tRNA(Gln) amidotransferase subunit B, mitochondrial (nempA) from Emericella nidulans (strain FGSC A4 / ATCC 38163 / CBS 112.46 / NRRL 194 / M139) (Aspergillus nidulans).